The primary structure comprises 68 residues: TxMMSK-03 (68 aa).

A signal peptide spans 1–19; it reads MSKLGALLIICLLLFPLTA. Residues 20–50 constitute a propeptide that is removed on maturation; that stretch reads VPMDGDQPADRPAERMQDDISFEQHPMFDAT. Cystine bridges form between cysteine 53–cysteine 67, cysteine 54–cysteine 63, and cysteine 59–cysteine 66. Proline 65 bears the 4-hydroxyproline; partial mark.

In terms of processing, contains 3 disulfide bonds. In terms of tissue distribution, expressed by the venom duct. Both hydroxylated and non-hydroxylated forms are mostly and only present in part 2 (proximal of the venom bulb) of the venom duct, respectively.

Its subcellular location is the secreted. In Conus textile (Cloth-of-gold cone), this protein is TxMMSK-03.